Consider the following 239-residue polypeptide: Purine nucleoside phosphorylase DeoD-type (239 aa).

H5 contributes to the a purine D-ribonucleoside binding site. Residues G21, R25, R44, and 88 to 91 each bind phosphate; that span reads RVGS. A purine D-ribonucleoside is bound by residues 180–182 and 204–205; these read EME and SD. D205 functions as the Proton donor in the catalytic mechanism.

It belongs to the PNP/UDP phosphorylase family. Homohexamer; trimer of homodimers.

It carries out the reaction a purine D-ribonucleoside + phosphate = a purine nucleobase + alpha-D-ribose 1-phosphate. It catalyses the reaction a purine 2'-deoxy-D-ribonucleoside + phosphate = a purine nucleobase + 2-deoxy-alpha-D-ribose 1-phosphate. In terms of biological role, catalyzes the reversible phosphorolytic breakdown of the N-glycosidic bond in the beta-(deoxy)ribonucleoside molecules, with the formation of the corresponding free purine bases and pentose-1-phosphate. This is Purine nucleoside phosphorylase DeoD-type from Klebsiella pneumoniae (strain 342).